The chain runs to 431 residues: Adenylosuccinate lyase (431 aa).

Residues arginine 4 to tyrosine 5, arginine 67 to aspartate 69, and threonine 93 to serine 94 contribute to the N(6)-(1,2-dicarboxyethyl)-AMP site. Histidine 141 (proton donor/acceptor) is an active-site residue. Glutamine 212 contacts N(6)-(1,2-dicarboxyethyl)-AMP. The active-site Proton donor/acceptor is the serine 262. Residues serine 263, lysine 268–asparagine 270, asparagine 276, and serine 307–isoleucine 311 each bind N(6)-(1,2-dicarboxyethyl)-AMP.

This sequence belongs to the lyase 1 family. Adenylosuccinate lyase subfamily. As to quaternary structure, homodimer and homotetramer. Residues from neighboring subunits contribute catalytic and substrate-binding residues to each active site.

The catalysed reaction is N(6)-(1,2-dicarboxyethyl)-AMP = fumarate + AMP. It carries out the reaction (2S)-2-[5-amino-1-(5-phospho-beta-D-ribosyl)imidazole-4-carboxamido]succinate = 5-amino-1-(5-phospho-beta-D-ribosyl)imidazole-4-carboxamide + fumarate. It participates in purine metabolism; AMP biosynthesis via de novo pathway; AMP from IMP: step 2/2. The protein operates within purine metabolism; IMP biosynthesis via de novo pathway; 5-amino-1-(5-phospho-D-ribosyl)imidazole-4-carboxamide from 5-amino-1-(5-phospho-D-ribosyl)imidazole-4-carboxylate: step 2/2. Its function is as follows. Catalyzes two reactions in de novo purine nucleotide biosynthesis. Catalyzes the breakdown of 5-aminoimidazole- (N-succinylocarboxamide) ribotide (SAICAR or 2-[5-amino-1-(5-phospho-beta-D-ribosyl)imidazole-4-carboxamido]succinate) to 5-aminoimidazole-4-carboxamide ribotide (AICAR or 5-amino-1-(5-phospho-beta-D-ribosyl)imidazole-4-carboxamide) and fumarate, and of adenylosuccinate (ADS or N(6)-(1,2-dicarboxyethyl)-AMP) to adenosine monophosphate (AMP) and fumarate. This Staphylococcus haemolyticus (strain JCSC1435) protein is Adenylosuccinate lyase (purB).